The following is a 502-amino-acid chain: Histidine--tRNA ligase (502 aa).

The protein belongs to the class-II aminoacyl-tRNA synthetase family. In terms of assembly, homodimer.

Its subcellular location is the cytoplasm. The catalysed reaction is tRNA(His) + L-histidine + ATP = L-histidyl-tRNA(His) + AMP + diphosphate + H(+). The polypeptide is Histidine--tRNA ligase (hisS) (Brucella suis biovar 1 (strain 1330)).